A 314-amino-acid polypeptide reads, in one-letter code: Olfactory receptor 5F1 (314 aa).

Residues 1–25 (MTRKNYTSLTEFVLLGLADTLELQI) are Extracellular-facing. Residue N5 is glycosylated (N-linked (GlcNAc...) asparagine). Residues 26–46 (ILFLFFLVIYTLTVLGNLGMI) form a helical membrane-spanning segment. Over 47–54 (LLIRIDSQ) the chain is Cytoplasmic. The chain crosses the membrane as a helical span at residues 55-75 (LHTPMYFFLANLSFVDVCNST). Topologically, residues 76 to 99 (TITPKMLADLLSEKKTISFAGCFL) are extracellular. Cysteines 97 and 189 form a disulfide. Residues 100–120 (QMYFFISLATTECILFGLMAY) form a helical membrane-spanning segment. At 121–139 (DRYAAICRPLLYSLIMSRT) the chain is on the cytoplasmic side. A helical membrane pass occupies residues 140–160 (VYLKMAAGAFAAGLLNFMVNT). The Extracellular segment spans residues 161-196 (SHVSSLSFCDSNVIHHFFCDSPPLFKLSCSDTILKE). Residues 197–217 (SISSILAGVNIVGTLLVILSS) traverse the membrane as a helical segment. Topologically, residues 218-237 (YSYVLFSIFSMHSGEGRHRA) are cytoplasmic. The chain crosses the membrane as a helical span at residues 238–258 (FSTCASHLTAIILFYATCIYT). The Extracellular segment spans residues 259-271 (YLRPSSSYSLNQD). A helical membrane pass occupies residues 272 to 292 (KVASVFYTVVIPMLNPLIYSL). At 293 to 314 (RSKEVKKALANVISRKRTSSFL) the chain is on the cytoplasmic side.

The protein belongs to the G-protein coupled receptor 1 family.

It is found in the cell membrane. Odorant receptor. The polypeptide is Olfactory receptor 5F1 (OR5F1) (Homo sapiens (Human)).